A 348-amino-acid chain; its full sequence is MTVRIAINGFGRIGRNVLRALYETGRRAEISAVAINELADAAGMAHLLKYDTSHGRFAWDVRQERDLLTVGDDTIRLLHIPEIGSLPWRELNVDIVLDCTGVYGSRADGEAHLKAGARKVLFSHPGGHDLDATVVYGVNEKELLPEHLLVSNASCTTNCIIPIIKLLDDAWGIESGTVTTIHSAMHDQQVIDAYHPDLRRTRAASQSIIPVDTRLAAGITRIFPKFNDRFEAIAVRVPTINVTAIDLSVSVRDAVKASEVNALLHSASLGAFSGIVDYTELPLVSIDFNHDPHSAIVDGTQTRVSGQHLIKTLVWCDNEWGFANRMIDTTLAMAASGFSLDAAASIKL.

NAD(+) is bound at residue 12-13 (RI). Substrate is bound by residues 154–156 (SCT), arginine 200, 213–214 (TR), and arginine 236. Residue cysteine 155 is the Nucleophile of the active site. Asparagine 318 is an NAD(+) binding site.

It belongs to the glyceraldehyde-3-phosphate dehydrogenase family. Epd subfamily. In terms of assembly, homotetramer.

It is found in the cytoplasm. It catalyses the reaction D-erythrose 4-phosphate + NAD(+) + H2O = 4-phospho-D-erythronate + NADH + 2 H(+). It participates in cofactor biosynthesis; pyridoxine 5'-phosphate biosynthesis; pyridoxine 5'-phosphate from D-erythrose 4-phosphate: step 1/5. Its function is as follows. Catalyzes the NAD-dependent conversion of D-erythrose 4-phosphate to 4-phosphoerythronate. This chain is D-erythrose-4-phosphate dehydrogenase, found in Erwinia tasmaniensis (strain DSM 17950 / CFBP 7177 / CIP 109463 / NCPPB 4357 / Et1/99).